Reading from the N-terminus, the 228-residue chain is Small ribosomal subunit protein uS3 (228 aa).

In terms of domain architecture, KH type-2 spans 39-107 (TREYLQDKLK…PVHINIEEIR (69 aa)).

The protein belongs to the universal ribosomal protein uS3 family. In terms of assembly, part of the 30S ribosomal subunit. Forms a tight complex with proteins S10 and S14.

In terms of biological role, binds the lower part of the 30S subunit head. Binds mRNA in the 70S ribosome, positioning it for translation. This Pseudomonas entomophila (strain L48) protein is Small ribosomal subunit protein uS3.